The chain runs to 197 residues: MTEIFSDTSIRQLSQMLLSLIFFHISEYILAITIHGASNVTLSSLLITKHYALAMLLSLLEYLTEIILFPGLKQHWWVSNFGLIMIIVGEIIRKAAIITAGRSFTHLIKINYEEHHGLVTHGVYRLMRHPSYCGFLIWSVGTQVMLCNPVSAVAFAVVVWRFFAQRIPYEEYFLNQFFGVQYLEYAESVASGVPFVN.

Helical transmembrane passes span 16–36, 52–72, and 81–101; these read MLLS…TIHG, ALAM…FPGL, and FGLI…ITAG. S-adenosyl-L-methionine-binding positions include 116 to 119, tyrosine 124, and 129 to 132; these read HGLV and HPSY. The chain crosses the membrane as a helical span at residues 140–160; the sequence is VGTQVMLCNPVSAVAFAVVVW. Arginine 166 contacts substrate. Residue glutamate 170 coordinates S-adenosyl-L-methionine.

This sequence belongs to the class VI-like SAM-binding methyltransferase superfamily. Isoprenylcysteine carboxyl methyltransferase family. Zn(2+) serves as cofactor. As to expression, expressed primarily in flowers, stems, leaves and roots. Almost not expressed in siliques. Detected in root tips and vascular tissues of roots, cotyledons, petiols, hypocotyls, filaments, pollen grains and the distal and proximal portions of the gynoecium.

The protein localises to the endoplasmic reticulum membrane. The enzyme catalyses [protein]-C-terminal S-[(2E,6E)-farnesyl]-L-cysteine + S-adenosyl-L-methionine = [protein]-C-terminal S-[(2E,6E)-farnesyl]-L-cysteine methyl ester + S-adenosyl-L-homocysteine. Inhibited by farnesylthioacetic acid (FTAA) and N-acetyl-S-trans, trans-farnesyl-l-cysteine (AFC). Catalyzes the post-translational methylation of isoprenylated C-terminal cysteine residues, resulting in the modulation of the function of prenylated proteins. Involved in negative regulation of abscisic acid signaling. Carboxyl methylation is a reversible and potentially regulated step in the post-translational modification of prenylated proteins. The polypeptide is Protein-S-isoprenylcysteine O-methyltransferase A (Arabidopsis thaliana (Mouse-ear cress)).